Here is a 445-residue protein sequence, read N- to C-terminus: Chromosome partition protein MukF (445 aa).

The interval 213–241 is leucine-zipper; sequence LSETSSTLRELQDTLQAASDELQTQILDI.

Belongs to the MukF family. Interacts, and probably forms a ternary complex, with MukE and MukB via its C-terminal region. The complex formation is stimulated by calcium or magnesium. It is required for an interaction between MukE and MukB.

The protein resides in the cytoplasm. Its subcellular location is the nucleoid. Its function is as follows. Involved in chromosome condensation, segregation and cell cycle progression. May participate in facilitating chromosome segregation by condensation DNA from both sides of a centrally located replisome during cell division. Not required for mini-F plasmid partitioning. Probably acts via its interaction with MukB and MukE. Overexpression results in anucleate cells. It has a calcium binding activity. This Vibrio campbellii (strain ATCC BAA-1116) protein is Chromosome partition protein MukF.